Reading from the N-terminus, the 130-residue chain is Small ribosomal subunit protein uS9 (130 aa).

Positions Gly102–Arg130 are disordered. Residues Lys111 to Arg130 show a composition bias toward basic residues.

Belongs to the universal ribosomal protein uS9 family.

The sequence is that of Small ribosomal subunit protein uS9 from Finegoldia magna (strain ATCC 29328 / DSM 20472 / WAL 2508) (Peptostreptococcus magnus).